The sequence spans 76 residues: Putative snRNP Sm-like protein (76 aa).

In terms of domain architecture, Sm spans 4–76 (RPLDVIHKSL…VLAISPTEEG (73 aa)).

It belongs to the snRNP Sm proteins family.

The chain is Putative snRNP Sm-like protein from Pyrococcus furiosus (strain ATCC 43587 / DSM 3638 / JCM 8422 / Vc1).